The primary structure comprises 205 residues: Large ribosomal subunit protein bL25 (205 aa).

The interval 185-205 is disordered; that stretch reads PAGAVSEAAEGGEAAGETPAA. Positions 186–205 are enriched in low complexity; that stretch reads AGAVSEAAEGGEAAGETPAA.

It belongs to the bacterial ribosomal protein bL25 family. CTC subfamily. In terms of assembly, part of the 50S ribosomal subunit; part of the 5S rRNA/L5/L18/L25 subcomplex. Contacts the 5S rRNA. Binds to the 5S rRNA independently of L5 and L18.

Functionally, this is one of the proteins that binds to the 5S RNA in the ribosome where it forms part of the central protuberance. The sequence is that of Large ribosomal subunit protein bL25 from Cupriavidus taiwanensis (strain DSM 17343 / BCRC 17206 / CCUG 44338 / CIP 107171 / LMG 19424 / R1) (Ralstonia taiwanensis (strain LMG 19424)).